We begin with the raw amino-acid sequence, 371 residues long: UDP-N-acetylglucosamine--N-acetylmuramyl-(pentapeptide) pyrophosphoryl-undecaprenol N-acetylglucosamine transferase (371 aa).

UDP-N-acetyl-alpha-D-glucosamine-binding positions include 15–17 (TGG), asparagine 126, arginine 172, serine 199, isoleucine 256, 275–280 (ALTVSE), and glutamine 301.

The protein belongs to the glycosyltransferase 28 family. MurG subfamily.

The protein localises to the cell inner membrane. It carries out the reaction di-trans,octa-cis-undecaprenyl diphospho-N-acetyl-alpha-D-muramoyl-L-alanyl-D-glutamyl-meso-2,6-diaminopimeloyl-D-alanyl-D-alanine + UDP-N-acetyl-alpha-D-glucosamine = di-trans,octa-cis-undecaprenyl diphospho-[N-acetyl-alpha-D-glucosaminyl-(1-&gt;4)]-N-acetyl-alpha-D-muramoyl-L-alanyl-D-glutamyl-meso-2,6-diaminopimeloyl-D-alanyl-D-alanine + UDP + H(+). The protein operates within cell wall biogenesis; peptidoglycan biosynthesis. Functionally, cell wall formation. Catalyzes the transfer of a GlcNAc subunit on undecaprenyl-pyrophosphoryl-MurNAc-pentapeptide (lipid intermediate I) to form undecaprenyl-pyrophosphoryl-MurNAc-(pentapeptide)GlcNAc (lipid intermediate II). This chain is UDP-N-acetylglucosamine--N-acetylmuramyl-(pentapeptide) pyrophosphoryl-undecaprenol N-acetylglucosamine transferase, found in Francisella philomiragia subsp. philomiragia (strain ATCC 25017 / CCUG 19701 / FSC 153 / O#319-036).